The primary structure comprises 163 residues: Lysosomal enzyme trafficking factor (163 aa).

The next 2 membrane-spanning stretches (helical) occupy residues 40-60 (MGWIGVGLYLLASAAAFYYVF) and 98-118 (LPFWFWTVVFLIPYLQMFLFL).

Belongs to the LYSET family. As to quaternary structure, interacts with GNPTAB; this interaction is important for proper localization of GNPTAB in Golgi stacks. Interacts with MBTPS1.

Its subcellular location is the golgi apparatus membrane. Its function is as follows. Required for mannose-6-phosphate-dependent trafficking of lysosomal enzymes. LYSET bridges GlcNAc-1-phosphate transferase (GNPTAB), to the membrane-bound transcription factor site-1 protease (MBTPS1), thus allowing proteolytic activation of the GNPTAB. GNPTAB is involved in the regulation of M6P-dependent Golgi-to-lysosome trafficking of lysosomal enzymes. LYSET is thus an essential factor for maturation and delivery of lysosomal hydrolases. The polypeptide is Lysosomal enzyme trafficking factor (LYSET) (Bos taurus (Bovine)).